The chain runs to 346 residues: Dimethylallyltranstransferase (346 aa).

Isopentenyl diphosphate is bound by residues Lys-96, Arg-99, and His-128. Mg(2+) contacts are provided by Asp-135 and Asp-141. Arg-147 is an isopentenyl diphosphate binding site.

Belongs to the FPP/GGPP synthase family. It depends on Mg(2+) as a cofactor.

It catalyses the reaction isopentenyl diphosphate + dimethylallyl diphosphate = (2E)-geranyl diphosphate + diphosphate. It participates in isoprenoid biosynthesis; geranyl diphosphate biosynthesis; geranyl diphosphate from dimethylallyl diphosphate and isopentenyl diphosphate: step 1/1. Its function is as follows. Prenyltransferase involved in the biosynthesis of ambiguines, a family of hapalindole-type alkaloids. Catalyzes the addition of isopentenyl diphosphate (IPP) onto dimethylallyl diphosphate (DMAPP) to form geranyl pyrophosphate (GPP). Cannot use farnesyl diphosphate (FPP) or geranylgeranyl diphosphate (GGPP). This Fischerella ambigua (strain UTEX 1903) protein is Dimethylallyltranstransferase.